Reading from the N-terminus, the 202-residue chain is Superoxide dismutase [Mn] (202 aa).

Residues H27, H82, D164, and H168 each contribute to the Mn(2+) site.

Belongs to the iron/manganese superoxide dismutase family. Homodimer. Mn(2+) is required as a cofactor.

It catalyses the reaction 2 superoxide + 2 H(+) = H2O2 + O2. Destroys superoxide anion radicals which are normally produced within the cells and which are toxic to biological systems. The polypeptide is Superoxide dismutase [Mn] (sodA) (Listeria monocytogenes serovar 1/2a (strain ATCC BAA-679 / EGD-e)).